Reading from the N-terminus, the 277-residue chain is Phosphoenolpyruvate synthase regulatory protein (277 aa).

157–164 (GVSRCGKT) lines the ADP pocket.

It belongs to the pyruvate, phosphate/water dikinase regulatory protein family. PSRP subfamily.

It carries out the reaction [pyruvate, water dikinase] + ADP = [pyruvate, water dikinase]-phosphate + AMP + H(+). The enzyme catalyses [pyruvate, water dikinase]-phosphate + phosphate + H(+) = [pyruvate, water dikinase] + diphosphate. In terms of biological role, bifunctional serine/threonine kinase and phosphorylase involved in the regulation of the phosphoenolpyruvate synthase (PEPS) by catalyzing its phosphorylation/dephosphorylation. This Escherichia coli O6:K15:H31 (strain 536 / UPEC) protein is Phosphoenolpyruvate synthase regulatory protein.